A 573-amino-acid polypeptide reads, in one-letter code: CTP synthase (573 aa).

Positions 1–281 (MGQTRIQART…DAYVVRRLGL (281 aa)) are amidoligase domain. Residue Ser23 participates in CTP binding. UTP is bound at residue Ser23. Residues 24 to 29 (SLGKGL) and Asp81 contribute to the ATP site. Positions 81 and 155 each coordinate Mg(2+). CTP is bound by residues 162 to 164 (DIE), 202 to 207 (KTKPTQ), and Lys238. UTP contacts are provided by residues 202 to 207 (KTKPTQ) and Lys238. The region spanning 306 to 554 (EVALVGKYVD…IAAALKYKLA (249 aa)) is the Glutamine amidotransferase type-1 domain. An L-glutamine-binding site is contributed by Gly369. Catalysis depends on Cys396, which acts as the Nucleophile; for glutamine hydrolysis. Residues 397 to 400 (LGLQ), Glu419, and Arg480 contribute to the L-glutamine site. Catalysis depends on residues His527 and Glu529.

Belongs to the CTP synthase family. In terms of assembly, homotetramer.

The enzyme catalyses UTP + L-glutamine + ATP + H2O = CTP + L-glutamate + ADP + phosphate + 2 H(+). It carries out the reaction L-glutamine + H2O = L-glutamate + NH4(+). The catalysed reaction is UTP + NH4(+) + ATP = CTP + ADP + phosphate + 2 H(+). Its pathway is pyrimidine metabolism; CTP biosynthesis via de novo pathway; CTP from UDP: step 2/2. With respect to regulation, allosterically activated by GTP, when glutamine is the substrate; GTP has no effect on the reaction when ammonia is the substrate. The allosteric effector GTP functions by stabilizing the protein conformation that binds the tetrahedral intermediate(s) formed during glutamine hydrolysis. Inhibited by the product CTP, via allosteric rather than competitive inhibition. In terms of biological role, catalyzes the ATP-dependent amination of UTP to CTP with either L-glutamine or ammonia as the source of nitrogen. Regulates intracellular CTP levels through interactions with the four ribonucleotide triphosphates. This is CTP synthase from Nocardia farcinica (strain IFM 10152).